Here is an 86-residue protein sequence, read N- to C-terminus: Serine protease inhibitor Kazal-type 4 (86 aa).

The first 26 residues, 1-26, serve as a signal peptide directing secretion; the sequence is MAVRLWVVALALAALFIVDREVPVSA. Positions 31–86 constitute a Kazal-like domain; the sequence is FSRMPICEHMTESPDCSRIYDPVCGTDGVTYESECKLCLARIENKQDIQIVKDGEC. 3 disulfide bridges follow: Cys-37-Cys-68, Cys-46-Cys-65, and Cys-54-Cys-86.

In terms of tissue distribution, synthesized in duodenal goblet cells and in monocytes in bone marrow and blood.

It localises to the secreted. In terms of biological role, inhibits the glucose-induced insulin secretion from perfused pancreas; also plays a role in the immune system. Does not inhibit trypsin. The chain is Serine protease inhibitor Kazal-type 4 (SPINK4) from Sus scrofa (Pig).